The chain runs to 290 residues: MLKTVHQKAGRHTRPVRAWLKLLWQRIDEDNMTTLAGNLAYVSLLSLVPLIAVVFALFAAFPMFSDVSIQLRHFIFANFMPATGDVIQRYIEQFVANSNKMTAVGACGLIVTALLLMYAIDSALNTIWRSKRTRPKVYSFAVYWMILTLGPLLAGASLAISSYLLSLRWASDLNTVIDNVLRILPLLLSWISFWLLYSIVPTTRVPNRDALVGAFVAALLFESGKKGFALYITMFPSYQLIYGVLAVIPILFVWVYWTWCIVLLGAEITVTLGEYRKLKQAAEQEEADQP.

The next 6 membrane-spanning stretches (helical) occupy residues 44-64, 104-124, 140-160, 183-203, 210-230, and 244-264; these read LLSL…FPMF, VGAC…DSAL, FAVY…SLAI, ILPL…VPTT, ALVG…GFAL, and VLAV…IVLL.

Belongs to the UPF0761 family.

It localises to the cell inner membrane. The chain is UPF0761 membrane protein YihY from Salmonella paratyphi B (strain ATCC BAA-1250 / SPB7).